Here is a 437-residue protein sequence, read N- to C-terminus: UDP-N-acetylmuramoylalanine--D-glutamate ligase (437 aa).

Gly112–Thr118 lines the ATP pocket.

Belongs to the MurCDEF family.

The protein resides in the cytoplasm. The enzyme catalyses UDP-N-acetyl-alpha-D-muramoyl-L-alanine + D-glutamate + ATP = UDP-N-acetyl-alpha-D-muramoyl-L-alanyl-D-glutamate + ADP + phosphate + H(+). The protein operates within cell wall biogenesis; peptidoglycan biosynthesis. In terms of biological role, cell wall formation. Catalyzes the addition of glutamate to the nucleotide precursor UDP-N-acetylmuramoyl-L-alanine (UMA). In Haemophilus influenzae (strain 86-028NP), this protein is UDP-N-acetylmuramoylalanine--D-glutamate ligase.